The following is a 1144-amino-acid chain: MTEPTYIPLRLHTEFSITDGMVRIKKLIAKAQEYGLPALGISDLMNEFGLVKFYKACRSAGIKPIGAADVRIGNPDAPDKPFRAMLIIRNDAGYLRLSELLTAAYVGKDRNVHHAELNPEWLENGDNSGLICLSGAHYGEVGVNLLNGNEDAARTAALKYAAWFPDAFYMELQRLPERPEWEACVSGSVKLAEELGLPVVATHPTQFMSRDDFNAHEARVCIAGGWVLTDKKRPRDFTPGQFFIPPETMAERFADLPEALENTVEIAKRCNLHITLGKNFLPLFPTPDGLSLDDYLIKLSNEGLQERMVQLYPDEAERAAKMPEYQERLDFELNIIIQMKFPGYFLIVQDFINWAKTHGCPVGPGRGSGAGSLVAYSLKITDLDPLKYALLFERFLNPERVSMPDFDVDFCQSNRGRVIEYVREKYGAEAVSQIVTFGTMSSKAVIRDVGRVLELPFMLCDKLSKLIPLEANKPLSLEKAMETEPQIQELIEAEEADELITLAKKLEDLTRGLGMHAGGVLIAPGKISDYSPVYQADESASPVSMYDKGDVEDVGLVKFDFLGLRNLTIIEMAQNNIKNTTGDIIDVGKIPLDDQVAYQIFRDANTTAVFQFESTGMKKMLKTAHTTKFEELIAFVSLYRPGPMDNIPDFVARMKGQEFQYIHPLLEGILAPTYGIMVYQEQVMQAAQIIGGYSLGGADLLRRAMGKKKPEEMVKHREIFAEGAAKQGISREKSDEIFNYMEKFAGYGFNKSHAAAYALISYQTAWLKAHYPAEFMAATMSSELDNTDQLKHFYDDCRANGIEFLPPDINESDYRFTPYPDMKIRYALGAIKGTGEAAVESITAARQSGGKFTGLLDFCERVGKEHMNRRTLEALIRGGAFDSIEPNRAMLLANIDLAMDNADQKAANANQGGLFDMMEDAIEPVRLIDAPMWSESEKLAEEKTVIGFYLSGHPFGPYAQEVRQIAPTKLDRLKPQDSVRLAGFVTAVRTMMGKRGKIAFVSLEDLSGQVEIMVGGQTLENCADCLKADQVLIIESKVSRDDYGGGDGLRILANQVMTLQTARERYARSLSLALAPHHDIGGLVRLLAAHQLPDTPRIPLQLSYANEKASGRLQVPPKWTVTPSSALFGELETLLGSRSVRVNW.

The protein belongs to the DNA polymerase type-C family. DnaE subfamily. DNA polymerase III contains a core (composed of alpha, epsilon and theta chains) that associates with a tau subunit. This core dimerizes to form the PolIII' complex. PolIII' associates with the gamma complex (composed of gamma, delta, delta', psi and chi chains) and with the beta chain to form the complete DNA polymerase III complex.

The protein localises to the cytoplasm. The catalysed reaction is DNA(n) + a 2'-deoxyribonucleoside 5'-triphosphate = DNA(n+1) + diphosphate. DNA polymerase III is a complex, multichain enzyme responsible for most of the replicative synthesis in bacteria. This DNA polymerase also exhibits 3' to 5' exonuclease activity. The alpha chain is the DNA polymerase. This is DNA polymerase III subunit alpha (dnaE) from Neisseria meningitidis serogroup B (strain ATCC BAA-335 / MC58).